The sequence spans 190 residues: NADH-quinone oxidoreductase subunit B (190 aa).

[4Fe-4S] cluster is bound by residues C39, C40, C104, and C135.

Belongs to the complex I 20 kDa subunit family. As to quaternary structure, NDH-1 is composed of 14 different subunits. Subunits NuoB, C, D, E, F, and G constitute the peripheral sector of the complex. It depends on [4Fe-4S] cluster as a cofactor.

The protein localises to the cell inner membrane. The catalysed reaction is a quinone + NADH + 5 H(+)(in) = a quinol + NAD(+) + 4 H(+)(out). In terms of biological role, NDH-1 shuttles electrons from NADH, via FMN and iron-sulfur (Fe-S) centers, to quinones in the respiratory chain. The immediate electron acceptor for the enzyme in this species is believed to be a menaquinone. Couples the redox reaction to proton translocation (for every two electrons transferred, four hydrogen ions are translocated across the cytoplasmic membrane), and thus conserves the redox energy in a proton gradient. This chain is NADH-quinone oxidoreductase subunit B, found in Chlorobium chlorochromatii (strain CaD3).